Here is a 690-residue protein sequence, read N- to C-terminus: Dual specificity protein kinase lkh1 (690 aa).

A disordered region spans residues 39 to 70; sequence PNLPPPFSVHQLQSFVPPQPPSSSSPSTTGTV. The region spanning 362–682 is the Protein kinase domain; that stretch reads YTVVRLLGHG…AKEALWHPFF (321 aa). Residues 368 to 376 and K391 contribute to the ATP site; that span reads LGHGTFGKV. D488 (proton acceptor) is an active-site residue.

Belongs to the protein kinase superfamily. CMGC Ser/Thr protein kinase family. Lammer subfamily. Autophosphorylates on all three types of residues.

It carries out the reaction L-seryl-[protein] + ATP = O-phospho-L-seryl-[protein] + ADP + H(+). The catalysed reaction is L-threonyl-[protein] + ATP = O-phospho-L-threonyl-[protein] + ADP + H(+). It catalyses the reaction L-tyrosyl-[protein] + ATP = O-phospho-L-tyrosyl-[protein] + ADP + H(+). Protein kinase that may act as a negative regulator of filamentous growth and flocculation. Appears to have a role in normal cell wall and septum formation and in cell separation. May have antagonistic function in the regulation of beta-glucan distribution between the sites for cell wall and septum assembly. The sequence is that of Dual specificity protein kinase lkh1 (lkh1) from Schizosaccharomyces pombe (strain 972 / ATCC 24843) (Fission yeast).